Consider the following 726-residue polypeptide: Amino-acid acetyltransferase, mitochondrial (726 aa).

Residues 1 to 18 (MSSRTLVGLRSTTSTHLQ) show a composition bias toward polar residues. Residues 1-44 (MSSRTLVGLRSTTSTHLQRSGVAAAAAVSSSSTSSSGSAPRRCL) constitute a mitochondrion transit peptide. The segment at 1–64 (MSSRTLVGLR…SAEFSSSSKS (64 aa)) is disordered. Residues 20–39 (SGVAAAAAVSSSSTSSSGSA) are compositionally biased toward low complexity. Polar residues predominate over residues 45-58 (SSASGRQVQQSAEF). The N-acetyltransferase domain maps to 547-716 (DRPRLGLDDP…YEAVCRSIQP (170 aa)).

The protein belongs to the acetyltransferase family.

The protein resides in the mitochondrion. It catalyses the reaction L-glutamate + acetyl-CoA = N-acetyl-L-glutamate + CoA + H(+). The protein operates within amino-acid biosynthesis; L-arginine biosynthesis; N(2)-acetyl-L-ornithine from L-glutamate: step 1/4. Its function is as follows. N-acetylglutamate synthase involved in arginine biosynthesis. The sequence is that of Amino-acid acetyltransferase, mitochondrial (arg2) from Aspergillus niger (strain ATCC MYA-4892 / CBS 513.88 / FGSC A1513).